The primary structure comprises 191 residues: dTTP/UTP pyrophosphatase (191 aa).

D69 serves as the catalytic Proton acceptor.

It belongs to the Maf family. YhdE subfamily. The cofactor is a divalent metal cation.

Its subcellular location is the cytoplasm. It carries out the reaction dTTP + H2O = dTMP + diphosphate + H(+). The enzyme catalyses UTP + H2O = UMP + diphosphate + H(+). Its function is as follows. Nucleoside triphosphate pyrophosphatase that hydrolyzes dTTP and UTP. May have a dual role in cell division arrest and in preventing the incorporation of modified nucleotides into cellular nucleic acids. This Desulforamulus reducens (strain ATCC BAA-1160 / DSM 100696 / MI-1) (Desulfotomaculum reducens) protein is dTTP/UTP pyrophosphatase.